The primary structure comprises 294 residues: MTIRLLGRTEIRRLAKDIDFRPRKSFGQNFVHDANTVRRIVSASGVHRHDHVLKVGPGLGSLTLALLDRGAHVTAVEIDPLLAQQLPTTIADHSHSEINRLTVLNQDILTLMPSDLENQPTALVANLPYNVAVPALLHLLAEFPTIRSVMVMVQAEVAERLAADPGGKDYGVPSAKVRFYGNVRRYGMVSPTVFWPIPRVYSGLVRIDRYETSPWPTDADFRAQVFDLIDIAFAQRRKTSRNAFAEWAGSGNESARRLLAASIDPSRRGETLAIADFVRLLQRSGEAEEQVRVQ.

The S-adenosyl-L-methionine site is built by N29, V31, G56, E77, D107, and N126.

Belongs to the class I-like SAM-binding methyltransferase superfamily. rRNA adenine N(6)-methyltransferase family. RsmA subfamily.

Its subcellular location is the cytoplasm. The enzyme catalyses adenosine(1518)/adenosine(1519) in 16S rRNA + 4 S-adenosyl-L-methionine = N(6)-dimethyladenosine(1518)/N(6)-dimethyladenosine(1519) in 16S rRNA + 4 S-adenosyl-L-homocysteine + 4 H(+). Functionally, specifically dimethylates two adjacent adenosines (A1518 and A1519) in the loop of a conserved hairpin near the 3'-end of 16S rRNA in the 30S particle. May play a critical role in biogenesis of 30S subunits. The sequence is that of Ribosomal RNA small subunit methyltransferase A from Mycobacterium sp. (strain MCS).